Consider the following 193-residue polypeptide: Xanthine phosphoribosyltransferase (193 aa).

Residues L20 and T27 each contribute to the xanthine site. 128-132 (ANGQA) serves as a coordination point for 5-phospho-alpha-D-ribose 1-diphosphate. K156 serves as a coordination point for xanthine.

Belongs to the purine/pyrimidine phosphoribosyltransferase family. Xpt subfamily. As to quaternary structure, homodimer.

It is found in the cytoplasm. The enzyme catalyses XMP + diphosphate = xanthine + 5-phospho-alpha-D-ribose 1-diphosphate. It participates in purine metabolism; XMP biosynthesis via salvage pathway; XMP from xanthine: step 1/1. In terms of biological role, converts the preformed base xanthine, a product of nucleic acid breakdown, to xanthosine 5'-monophosphate (XMP), so it can be reused for RNA or DNA synthesis. The sequence is that of Xanthine phosphoribosyltransferase from Streptococcus agalactiae serotype Ia (strain ATCC 27591 / A909 / CDC SS700).